Reading from the N-terminus, the 277-residue chain is 2,3,4,5-tetrahydropyridine-2,6-dicarboxylate N-succinyltransferase (277 aa).

Substrate contacts are provided by arginine 106 and aspartate 143.

The protein belongs to the transferase hexapeptide repeat family. As to quaternary structure, homotrimer.

It is found in the cytoplasm. It carries out the reaction (S)-2,3,4,5-tetrahydrodipicolinate + succinyl-CoA + H2O = (S)-2-succinylamino-6-oxoheptanedioate + CoA. It functions in the pathway amino-acid biosynthesis; L-lysine biosynthesis via DAP pathway; LL-2,6-diaminopimelate from (S)-tetrahydrodipicolinate (succinylase route): step 1/3. This chain is 2,3,4,5-tetrahydropyridine-2,6-dicarboxylate N-succinyltransferase, found in Variovorax paradoxus (strain S110).